The primary structure comprises 230 residues: dITP/XTP pyrophosphatase (230 aa).

7–12 (STNPGK) contacts substrate. Mg(2+)-binding residues include Glu-41 and Asp-70. The active-site Proton acceptor is the Asp-70. Residues Ser-71, 181-184 (FGYD), Lys-205, and 210-211 (HR) contribute to the substrate site.

It belongs to the HAM1 NTPase family. In terms of assembly, homodimer. Mg(2+) serves as cofactor.

The catalysed reaction is XTP + H2O = XMP + diphosphate + H(+). The enzyme catalyses dITP + H2O = dIMP + diphosphate + H(+). It catalyses the reaction ITP + H2O = IMP + diphosphate + H(+). Pyrophosphatase that catalyzes the hydrolysis of nucleoside triphosphates to their monophosphate derivatives, with a high preference for the non-canonical purine nucleotides XTP (xanthosine triphosphate), dITP (deoxyinosine triphosphate) and ITP. Seems to function as a house-cleaning enzyme that removes non-canonical purine nucleotides from the nucleotide pool, thus preventing their incorporation into DNA/RNA and avoiding chromosomal lesions. The protein is dITP/XTP pyrophosphatase of Anaeromyxobacter sp. (strain Fw109-5).